Here is a 148-residue protein sequence, read N- to C-terminus: Transcriptional regulator MraZ (148 aa).

SpoVT-AbrB domains are found at residues 5–53 (ETAI…AEKE) and 82–125 (SAVL…SEQA).

The protein belongs to the MraZ family. In terms of assembly, forms oligomers.

The protein resides in the cytoplasm. The protein localises to the nucleoid. The sequence is that of Transcriptional regulator MraZ from Xanthomonas oryzae pv. oryzae (strain MAFF 311018).